Here is a 257-residue protein sequence, read N- to C-terminus: Ribosomal RNA small subunit methyltransferase A (257 aa).

S-adenosyl-L-methionine contacts are provided by N12, L14, G39, E60, D85, and N105.

It belongs to the class I-like SAM-binding methyltransferase superfamily. rRNA adenine N(6)-methyltransferase family. RsmA subfamily.

Its subcellular location is the cytoplasm. The catalysed reaction is adenosine(1518)/adenosine(1519) in 16S rRNA + 4 S-adenosyl-L-methionine = N(6)-dimethyladenosine(1518)/N(6)-dimethyladenosine(1519) in 16S rRNA + 4 S-adenosyl-L-homocysteine + 4 H(+). Specifically dimethylates two adjacent adenosines (A1518 and A1519) in the loop of a conserved hairpin near the 3'-end of 16S rRNA in the 30S particle. May play a critical role in biogenesis of 30S subunits. The polypeptide is Ribosomal RNA small subunit methyltransferase A (Methylococcus capsulatus (strain ATCC 33009 / NCIMB 11132 / Bath)).